The following is a 203-amino-acid chain: Large ribosomal subunit protein uL22 (203 aa).

The segment covering 138–167 (PENTQSGALSQQSQAEQPQNDPENGVDSQL) has biased composition (polar residues). The interval 138–203 (PENTQSGALS…TVLAQEKEVK (66 aa)) is disordered. A compositionally biased stretch (low complexity) spans 168–177 (SAKTNSTTTA). A compositionally biased stretch (polar residues) spans 183 to 196 (ADNSTKNDATNTVL).

Belongs to the universal ribosomal protein uL22 family. As to quaternary structure, part of the 50S ribosomal subunit.

In terms of biological role, this protein binds specifically to 23S rRNA; its binding is stimulated by other ribosomal proteins, e.g. L4, L17, and L20. It is important during the early stages of 50S assembly. It makes multiple contacts with different domains of the 23S rRNA in the assembled 50S subunit and ribosome. The globular domain of the protein is located near the polypeptide exit tunnel on the outside of the subunit, while an extended beta-hairpin is found that lines the wall of the exit tunnel in the center of the 70S ribosome. The polypeptide is Large ribosomal subunit protein uL22 (Mesomycoplasma hyopneumoniae (strain 7448) (Mycoplasma hyopneumoniae)).